The primary structure comprises 684 residues: Extracellular lipase (684 aa).

Positions 1–48 are cleaved as a signal peptide; sequence MKKKLIYAAVVSALLAGCGGSDDNKGDTSSYLDYLLTGSNAVGPSALA. Disordered stretches follow at residues 321–405 and 462–493; these read SIPV…ADWG and QRERLRPGAGPDLEDLCRHAGGQEGGAGGDRS. Over residues 385–405 the composition is skewed to basic and acidic residues; sequence ADCRSDPPERAAGRGEQADWG. Ser568 functions as the Nucleophile in the catalytic mechanism.

This sequence belongs to the AB hydrolase superfamily. Lipase family. Monomer.

Its subcellular location is the secreted. It carries out the reaction a triacylglycerol + H2O = a diacylglycerol + a fatty acid + H(+). Functionally, the optimum chain lengths for the acyl moiety is C6 for ester hydrolysis and C6 and C8 for triacylglycerol hydrolysis. This Aeromonas hydrophila protein is Extracellular lipase.